A 318-amino-acid polypeptide reads, in one-letter code: Acetyl-coenzyme A carboxylase carboxyl transferase subunit alpha (318 aa).

One can recognise a CoA carboxyltransferase C-terminal domain in the interval 39–292; it reads LSDKAERQLR…GAAIAETLPG (254 aa).

This sequence belongs to the AccA family. Acetyl-CoA carboxylase is a heterohexamer composed of biotin carboxyl carrier protein (AccB), biotin carboxylase (AccC) and two subunits each of ACCase subunit alpha (AccA) and ACCase subunit beta (AccD).

It localises to the cytoplasm. The catalysed reaction is N(6)-carboxybiotinyl-L-lysyl-[protein] + acetyl-CoA = N(6)-biotinyl-L-lysyl-[protein] + malonyl-CoA. It functions in the pathway lipid metabolism; malonyl-CoA biosynthesis; malonyl-CoA from acetyl-CoA: step 1/1. Component of the acetyl coenzyme A carboxylase (ACC) complex. First, biotin carboxylase catalyzes the carboxylation of biotin on its carrier protein (BCCP) and then the CO(2) group is transferred by the carboxyltransferase to acetyl-CoA to form malonyl-CoA. In Acidiphilium cryptum (strain JF-5), this protein is Acetyl-coenzyme A carboxylase carboxyl transferase subunit alpha.